Here is a 347-residue protein sequence, read N- to C-terminus: ATP-dependent (S)-NAD(P)H-hydrate dehydratase (347 aa).

A YjeF C-terminal domain is found at 53-344 (TLQLVRNIIP…AEVGAAFSKL (292 aa)). A Phosphotyrosine modification is found at Y85. Residues G153 and 206-212 (NHVEFSR) contribute to the (6S)-NADPHX site. N240 carries an N-linked (GlcNAc...) asparagine glycan. ATP contacts are provided by residues 246–250 (KGERD) and 265–274 (GSSRRCGGQG). Residue D275 coordinates (6S)-NADPHX. N-linked (GlcNAc...) asparagine glycosylation is present at N297.

It belongs to the NnrD/CARKD family. Mg(2+) serves as cofactor.

It localises to the mitochondrion. It catalyses the reaction (6S)-NADHX + ATP = ADP + phosphate + NADH + H(+). It carries out the reaction (6S)-NADPHX + ATP = ADP + phosphate + NADPH + H(+). Catalyzes the dehydration of the S-form of NAD(P)HX at the expense of ATP, which is converted to ADP. Together with NAD(P)HX epimerase, which catalyzes the epimerization of the S- and R-forms, the enzyme allows the repair of both epimers of NAD(P)HX, a damaged form of NAD(P)H that is a result of enzymatic or heat-dependent hydration. The sequence is that of ATP-dependent (S)-NAD(P)H-hydrate dehydratase from Homo sapiens (Human).